Reading from the N-terminus, the 169-residue chain is Ribosome maturation factor RimP (169 aa).

The protein belongs to the RimP family.

The protein resides in the cytoplasm. Functionally, required for maturation of 30S ribosomal subunits. This chain is Ribosome maturation factor RimP, found in Pseudomonas putida (strain W619).